Reading from the N-terminus, the 388-residue chain is Translation initiation factor eIF2B subunit beta (388 aa).

The segment at 109-133 (DDFETTTSNNNNNNNNNNINSSSNI) is disordered. A compositionally biased stretch (low complexity) spans 116-133 (SNNNNNNNNNNINSSSNI).

Belongs to the eIF-2B alpha/beta/delta subunits family. In terms of assembly, component of the translation initiation factor 2B (eIF2B) complex which is a heterodecamer of two sets of five different subunits: alpha, beta, gamma, delta and epsilon. Subunits alpha, beta and delta comprise a regulatory subcomplex and subunits epsilon and gamma comprise a catalytic subcomplex. Within the complex, the hexameric regulatory complex resides at the center, with the two heterodimeric catalytic subcomplexes bound on opposite sides.

The protein localises to the cytoplasm. The protein resides in the cytosol. Functionally, acts as a component of the translation initiation factor 2B (eIF2B) complex, which catalyzes the exchange of GDP for GTP on eukaryotic initiation factor 2 (eIF2) gamma subunit. Its guanine nucleotide exchange factor activity is repressed when bound to eIF2 complex phosphorylated on the alpha subunit, thereby limiting the amount of methionyl-initiator methionine tRNA available to the ribosome and consequently global translation is repressed. The polypeptide is Translation initiation factor eIF2B subunit beta (eif2b2) (Dictyostelium discoideum (Social amoeba)).